A 696-amino-acid chain; its full sequence is D-(-)-3-hydroxybutyrate oligomer hydrolase (696 aa).

An N-terminal signal peptide occupies residues 1–26; it reads MTKLGWGRRVVWGAALAAVAMLGACN. The active-site Charge relay system is the serine 309.

The protein belongs to the D-(-)-3-hydroxybutyrate oligomer hydrolase family.

It localises to the secreted. It catalyses the reaction (3R)-hydroxybutanoate dimer + H2O = 2 (R)-3-hydroxybutanoate + H(+). It functions in the pathway lipid metabolism; butanoate metabolism. Its function is as follows. Participates in the degradation of poly-3-hydroxybutyrate (PHB). It works downstream of poly(3-hydroxybutyrate) depolymerase, hydrolyzing D(-)-3-hydroxybutyrate oligomers of various length (3HB-oligomers) into 3HB-monomers. This chain is D-(-)-3-hydroxybutyrate oligomer hydrolase, found in Burkholderia cenocepacia (strain HI2424).